We begin with the raw amino-acid sequence, 115 residues long: Tyrosine-protein phosphatase 22 (115 aa).

Residues 1 to 115 (WLMIVEQKCR…ETGGDAPMVV (115 aa)) form the Tyrosine-protein phosphatase domain. D83 provides a ligand contact to substrate.

It belongs to the protein-tyrosine phosphatase family.

It catalyses the reaction O-phospho-L-tyrosyl-[protein] + H2O = L-tyrosyl-[protein] + phosphate. This Styela plicata (Wrinkled sea squirt) protein is Tyrosine-protein phosphatase 22 (STY-22).